The following is an 861-amino-acid chain: MTITVFATEYDPAHVIVNILCKNPSEHLIFPIIVKYKPSKNVYFCMQTQKCKFSKRIETVFVCDAESLNFSYYVKNALPIKSEDIIHCLNTEETENLYKDFLLSHVPEGSENIEFKSLVFFCKTIIIKHLTNKYLLPTSPFWFLSTYGQTEGMLLLTMYYYLFEEQKSTIATTKNYVQCFTDKLGDMVFTYSSMSEFINITLKSNYRKKFVSFSEYAKQKNIRDRKEFLYLDKQIDIFRNSVHLTNSFRVHYIYIAYSTALEKNKFIKYSQLTSYDPTRSDTSQCQENMYILGNSLHSDLISIMKQYFNEDSYFQNYVEIKRMLNNKFQMQQYVYDINSNRNIMLVINSDQISKMVNKCNKHGEGYFTPIKLGLQGFLKILASNKSILIDGKPVTRRQYLHDQFSNPIPMFRVQMSYKNLYCFGSAESWYKNMGFDQVMQFLPNEYISDESLTSTFWLQDTTFLSDEIEKQFYVTRHEIFNEYLPVTNYIGDLDLPLQDSAIITESLFFSMCKLMRNVLINAWQKIFPFIDKDAYPIFFFKTTCSNPENPLNHNVCYNEVETAFCVCKKKIGLRIAIPIPQGTAIIGSEPLKQLSKIFNHLMCLNHDLMQILNSVIFPGECFDTGIYNTGRCLRLGFMYKVDEENNRFLYGRLKPIFIVPEKMKKNFQDFVSMQLDLNNILHHGTKDQTITEIIYSIFDKACPTEFSFIDSRTKQLYHRKQSSLETLCLKYLHVNGFSETSCLSRDDLLMTFTRSIAWPQMLKKNIQHCEARTATQFQHVTFLKIDHKNIQLKKLQNGKLSDFSCLTRNHKGNRENVLVYLEFKVDNNRILIILWSKCFTTKCKSNSKQVHSSVVLDSLNM.

The CHC2-type zinc finger occupies 805 to 843 (CLTRNHKGNRENVLVYLEFKVDNNRILIILWSKCFTTKC).

It belongs to the herpesviridae DNA primase family. In terms of assembly, associates with the helicase and the primase-associated factor to form the helicase-primase factor.

The protein localises to the host nucleus. Functionally, essential component of the helicase/primase complex. Unwinds the DNA at the replication forks and generates single-stranded DNA for both leading and lagging strand synthesis. The primase initiates primer synthesis and thereby produces large amount of short RNA primers on the lagging strand that the polymerase elongates using dNTPs. The polypeptide is DNA primase (U43) (Human herpesvirus 7 (strain JI) (HHV-7)).